We begin with the raw amino-acid sequence, 158 residues long: Transcriptional regulator MraZ (158 aa).

SpoVT-AbrB domains follow at residues 7–57 (THQN…PTAA) and 86–129 (AYPV…EPAA). A disordered region spans residues 133–158 (RRAEARTRSRQLALPAQGRRQGGADA).

The protein belongs to the MraZ family. In terms of assembly, forms oligomers.

Its subcellular location is the cytoplasm. It is found in the nucleoid. This is Transcriptional regulator MraZ from Gluconacetobacter diazotrophicus (strain ATCC 49037 / DSM 5601 / CCUG 37298 / CIP 103539 / LMG 7603 / PAl5).